Here is a 633-residue protein sequence, read N- to C-terminus: MTNQLPNKVELAEVVPQNGGVFLTWEDLWVTASSVKDGSKAILKGLTGYAMPGELLAIMGPSGSGKSTLLDTIAGRLGSSTRQSGDILINGRRQTLAYGSSAYVTQDDTLLATLTIKEAVYYSAELQLPNSMSKSEKKEIADVTLKGMGLQDAMETRIGGWSGKGISGGQKRRVSICLEILTRPKLLFLDEPTSGLDSAASYYVMKAIASQCQGRTIIASIHQPSVDVFSLFHSLCLLSSGRTVYFGPASAANEFFALSGFPCPTLQNPSDHFLKTINSDFDQDIEEGSTRRKSTEEVIDILIKSYKASDKYNAVQSQVAEICQQEGEMLDKRSHASFITQSLVLTRRSFINMSRDLGYYWLRLAVYVVIAVGLGSLYYDVGFSAASVQARGSMLMFVASFITFMAIGGFPSFVEDMKVFQREKLNGHYGSGSFVIANTLSAMPYLLLVSLIPGAIAYFMTGLQNGFEHFIYFALVLFTCMMIVESLMMIVASMVPNFLMGLIAGAGIQALMLLSGGFFRLPNDLPKPFWKYPLHYVAFHKYAYEGMFKNEFEGLKIHDVNGEDILRNTWQMNMDYSKWIDLVILLGMLVLYRVLFLLVVKAGEIVKPAIRAFMSHSPNQINSAERPLDVFDS.

The 243-residue stretch at 23–265 (LTWEDLWVTA…FALSGFPCPT (243 aa)) folds into the ABC transporter domain. Residue 60-67 (GPSGSGKS) coordinates ATP. The 213-residue stretch at 340–552 (TQSLVLTRRS…AYEGMFKNEF (213 aa)) folds into the ABC transmembrane type-2 domain. A glycan (N-linked (GlcNAc...) asparagine) is linked at asparagine 352. 6 helical membrane passes run 364-384 (LAVY…VGFS), 394-414 (MLMF…PSFV), 440-460 (LSAM…AYFM), 470-490 (FIYF…LMMI), 498-518 (FLMG…SGGF), and 580-600 (IDLV…LLVV).

This sequence belongs to the ABC transporter superfamily. ABCG family. Homodimer. In terms of tissue distribution, restricted to the petals, with the highest expression in the limb and, to a lesser extent, in petal tubes, probably in both epidermal and mesophyll cell layers.

It is found in the cell membrane. Its function is as follows. ABC transporter controlling the release of volatile organic compounds (VOCs), including floral volatile benzenoids and phenylpropanoids (FVBP), in flowers of fragrant cultivars (e.g. cv. Mitchell and cv. V26). This scent, mostly produced in the evening and night by the petals, attracts the pollinators (e.g. the night-active hawkmoth pollinator Manduca sexta). The chain is ABC transporter G family member 1 from Petunia hybrida (Petunia).